Consider the following 492-residue polypeptide: Catalase isozyme A (492 aa).

The segment at Met-1–Ala-23 is disordered. Positions Pro-8–Ala-21 are enriched in polar residues. Residues His-65 and Asn-138 contribute to the active site. Tyr-348 provides a ligand contact to heme.

The protein belongs to the catalase family. In terms of assembly, homotetramer. Heme serves as cofactor.

The protein resides in the peroxisome. Its subcellular location is the glyoxysome. It carries out the reaction 2 H2O2 = O2 + 2 H2O. Functionally, occurs in almost all aerobically respiring organisms and serves to protect cells from the toxic effects of hydrogen peroxide. This chain is Catalase isozyme A, found in Oryza sativa subsp. indica (Rice).